A 432-amino-acid polypeptide reads, in one-letter code: MAVSAFQLWRAGGLLRRNFLTHSSSWKIPPRVLKSSQPEALLSVTNNALCFAPLQTFTDEDIMMQKAVKKFAQEQIAPLVSTMDENSKMEKSVIQGLFQQGMMGIEVEAKYGGTEASFLCSVLVIEELAKVDASVALLCDIQNTVINKLFRKHGTEEQKATYLPKLVTEKLGSFCLSEAGAGSDSFALKTRADKSGNYYVINGSKMWISNAEHAELFLVFANVDPPSGYRGITCFLVDRDTEGFQIGRRENKMGIRASSTCQLTFENVKVPETSVLGKIGHGYKYAIGSLNEGRIGIAAQMLGLAQGCFDYTIPYIKERMQFGKRIFDFQGLQHQVAHVATQLEAARLLTYNAARLVEAGRPFIKEASMAKYYASEVAGLTTSKCIEWMGGVGYTKDYPVEKFFRDAKIGTIYEGTSNIQLNTIAKHIDAEY.

A mitochondrion-targeting transit peptide spans M1 to L33. K70 bears the N6-acetyllysine; alternate mark. N6-succinyllysine; alternate is present on K70. FAD contacts are provided by residues F174–S183 and W207–S209. Substrate is bound at residue S183. At S183 the chain carries Phosphoserine. A substrate-binding site is contributed by Y229. Position 278 is an N6-succinyllysine (K278). Y283 is a substrate binding site. K284 bears the N6-acetyllysine; alternate mark. N6-succinyllysine; alternate is present on K284. N291–R294 lines the substrate pocket. FAD contacts are provided by residues R319, Q330, and E387–G391. Residue E414 is the Proton acceptor of the active site. T416–N418 contributes to the FAD binding site. Position 426 is an N6-acetyllysine (K426).

It belongs to the acyl-CoA dehydrogenase family. Homotetramer. FAD serves as cofactor. Ubiquitously expressed.

The protein resides in the mitochondrion matrix. The enzyme catalyses 2-methylbutanoyl-CoA + oxidized [electron-transfer flavoprotein] + H(+) = (2E)-2-methylbut-2-enoyl-CoA + reduced [electron-transfer flavoprotein]. The catalysed reaction is (2S)-2-methylbutanoyl-CoA + oxidized [electron-transfer flavoprotein] + H(+) = (2E)-2-methylbut-2-enoyl-CoA + reduced [electron-transfer flavoprotein]. It carries out the reaction (2R)-2-methylbutanoyl-CoA + oxidized [electron-transfer flavoprotein] + H(+) = ethylacryloyl-CoA + reduced [electron-transfer flavoprotein]. It catalyses the reaction butanoyl-CoA + oxidized [electron-transfer flavoprotein] + H(+) = (2E)-butenoyl-CoA + reduced [electron-transfer flavoprotein]. The enzyme catalyses 2-methylpropanoyl-CoA + oxidized [electron-transfer flavoprotein] + H(+) = 2-methylpropenoyl-CoA + reduced [electron-transfer flavoprotein]. The catalysed reaction is hexanoyl-CoA + oxidized [electron-transfer flavoprotein] + H(+) = (2E)-hexenoyl-CoA + reduced [electron-transfer flavoprotein]. It carries out the reaction valproyl-CoA + oxidized [electron-transfer flavoprotein] + H(+) = (2E)-2-propylpent-2-enoyl-CoA + reduced [electron-transfer flavoprotein]. It participates in lipid metabolism; mitochondrial fatty acid beta-oxidation. Its pathway is amino-acid degradation; L-isoleucine degradation. With respect to regulation, inhibited by N-ethylmaleimide, hydroxymercuribenzoate, methyl mercury iodide and heavy metals such as Hg2+, Cu2+, and Ag2+. In terms of biological role, short and branched chain specific acyl-CoA dehydrogenase that catalyzes the removal of one hydrogen from C-2 and C-3 of the fatty acyl-CoA thioester, resulting in the formation of trans-2-enoyl-CoA. Among the different mitochondrial acyl-CoA dehydrogenases, acts specifically on short and branched chain acyl-CoA derivatives such as (S)-2-methylbutyryl-CoA as well as short straight chain acyl-CoAs such as butyryl-CoA. Plays an important role in the metabolism of L-isoleucine by catalyzing the dehydrogenation of 2-methylbutyryl-CoA, one of the steps of the L-isoleucine catabolic pathway. Can also act on valproyl-CoA, a metabolite of the valproic acid drug. In Rattus norvegicus (Rat), this protein is Short/branched chain specific acyl-CoA dehydrogenase, mitochondrial.